The chain runs to 1044 residues: Carbamoyl phosphate synthase large chain (1044 aa).

The carboxyphosphate synthetic domain stretch occupies residues 1 to 398 (MPKREDISKI…ALMKAIASLD (398 aa)). Positions 129, 169, 175, 176, 208, 210, 215, 241, 242, 243, 284, and 296 each coordinate ATP. One can recognise an ATP-grasp 1 domain in the interval 133–325 (HDFLISIGER…IARIAAKIAV (193 aa)). Positions 284, 296, and 298 each coordinate Mg(2+). The Mn(2+) site is built by Gln284, Glu296, and Asn298. The tract at residues 399-539 (IDLSYRLRLY…YSTYEDEDEL (141 aa)) is oligomerization domain. Residues 540–916 (PGISGFVAII…AIRKSILRDI (377 aa)) are carbamoyl phosphate synthetic domain. The 190-residue stretch at 665-854 (SKRLEAMGID…WVELAVSAIM (190 aa)) folds into the ATP-grasp 2 domain. 10 residues coordinate ATP: Arg701, Lys738, Leu740, Glu745, Gly770, Val771, His772, Ser773, Gln813, and Glu825. The Mg(2+) site is built by Gln813, Glu825, and Asn827. Mn(2+)-binding residues include Gln813, Glu825, and Asn827. The region spanning 911–1044 (SILRDIKSVF…IDYREISSYH (134 aa)) is the MGS-like domain. An allosteric domain region spans residues 916–1044 (IKSVFISVRD…IDYREISSYH (129 aa)).

The protein belongs to the CarB family. Composed of two chains; the small (or glutamine) chain promotes the hydrolysis of glutamine to ammonia, which is used by the large (or ammonia) chain to synthesize carbamoyl phosphate. Tetramer of heterodimers (alpha,beta)4. The cofactor is Mg(2+). It depends on Mn(2+) as a cofactor.

The catalysed reaction is hydrogencarbonate + L-glutamine + 2 ATP + H2O = carbamoyl phosphate + L-glutamate + 2 ADP + phosphate + 2 H(+). The enzyme catalyses hydrogencarbonate + NH4(+) + 2 ATP = carbamoyl phosphate + 2 ADP + phosphate + 2 H(+). It participates in amino-acid biosynthesis; L-arginine biosynthesis; carbamoyl phosphate from bicarbonate: step 1/1. The protein operates within pyrimidine metabolism; UMP biosynthesis via de novo pathway; (S)-dihydroorotate from bicarbonate: step 1/3. In terms of biological role, large subunit of the glutamine-dependent carbamoyl phosphate synthetase (CPSase). CPSase catalyzes the formation of carbamoyl phosphate from the ammonia moiety of glutamine, carbonate, and phosphate donated by ATP, constituting the first step of 2 biosynthetic pathways, one leading to arginine and/or urea and the other to pyrimidine nucleotides. The large subunit (synthetase) binds the substrates ammonia (free or transferred from glutamine from the small subunit), hydrogencarbonate and ATP and carries out an ATP-coupled ligase reaction, activating hydrogencarbonate by forming carboxy phosphate which reacts with ammonia to form carbamoyl phosphate. The protein is Carbamoyl phosphate synthase large chain of Thermoplasma volcanium (strain ATCC 51530 / DSM 4299 / JCM 9571 / NBRC 15438 / GSS1).